Here is a 215-residue protein sequence, read N- to C-terminus: Small ribosomal subunit protein eS1 (215 aa).

This sequence belongs to the eukaryotic ribosomal protein eS1 family.

This chain is Small ribosomal subunit protein eS1, found in Halorubrum lacusprofundi (strain ATCC 49239 / DSM 5036 / JCM 8891 / ACAM 34).